The chain runs to 226 residues: UPF0319 protein YPO1442/y2728/YP_1333 (226 aa).

Positions 1 to 20 (MKLGLVAGMLAVCFSFSSVA) are cleaved as a signal peptide.

The protein belongs to the UPF0319 family.

In Yersinia pestis, this protein is UPF0319 protein YPO1442/y2728/YP_1333.